We begin with the raw amino-acid sequence, 500 residues long: Glutamate--tRNA ligase (500 aa).

The short motif at 12–22 (PSPTGHLHIGN) is the 'HIGH' region element. The 'KMSKS' region signature appears at 259 to 263 (KLSKR). Position 262 (Lys-262) interacts with ATP.

Belongs to the class-I aminoacyl-tRNA synthetase family. Glutamate--tRNA ligase type 1 subfamily. Monomer.

Its subcellular location is the cytoplasm. It carries out the reaction tRNA(Glu) + L-glutamate + ATP = L-glutamyl-tRNA(Glu) + AMP + diphosphate. Functionally, catalyzes the attachment of glutamate to tRNA(Glu) in a two-step reaction: glutamate is first activated by ATP to form Glu-AMP and then transferred to the acceptor end of tRNA(Glu). This Lactobacillus delbrueckii subsp. bulgaricus protein is Glutamate--tRNA ligase.